The following is a 271-amino-acid chain: Orotidine 5'-phosphate decarboxylase (271 aa).

Lys95 serves as the catalytic Proton donor.

This sequence belongs to the OMP decarboxylase family. Type 2 subfamily.

The enzyme catalyses orotidine 5'-phosphate + H(+) = UMP + CO2. It functions in the pathway pyrimidine metabolism; UMP biosynthesis via de novo pathway; UMP from orotate: step 2/2. This is Orotidine 5'-phosphate decarboxylase from Ralstonia pickettii (strain 12J).